Consider the following 760-residue polypeptide: MRYNQFSYIPTSLERAAEELKELGFDLDLQKTAKANLESFLRKIFFHYPDSDYPLSHLIAKNDMDALSFFQSEQELSKEVFDLLALQVLGFIPGVDFTEADAFLDKLAFPIHFDETEIIKHIHHLLATRCKSGMTLIDDLVSQGMLTMDNDYHFFNGKSLATFDTSQLIREVVYVEAPLDTDQDGQFDLIKVNIIRPQSQKPLPTLMTPSPYHQGINEVANDKKLYRMEKELVVKKRRQITVEDRDFIPLETQPCKLPIGQNLESFSYINSYSLNDYFLARGFANIYVSGVGTAGSTGFMTSGDYAQIESFKAVIDWLNGRATAYTSHSKTHQVRADWANGLVCTTGKSYLGTMSTGLATTGVDGLAMIIAESAISSWYNYYRENGLVCSPGGYPGEDLDVLTELTYSRNLLAGDYLRHNDHYQELLNQQSQALDRQSGDYNQFWHDRNYLKNAHQIKCDVVYSHGLQDWNVKPRQVYEIFNALPSTINKHLFLHQGEHVYMHNWQSIDFRESMNALLCQKLLGLANDFSLPEMIWQDNTCPQNWQERKVFGTSTIKELDLGQELLLIDNHYGEDEFKAYGKDFRASKAALFKGKANQALIDILLEEDLPINGEIVLQLKVKSSENKGLLSAQILDYGKKKRLGDLPIALTQSSIDNGQNFSREPLKELPFREDSYRVISKGFMNLQNRNNLSSIETIPNNKWMTVRLPLQPTIYHLEKGDTLRVILYTTDFEHTVRDNSNYALTIDLSQSQLIVPIASN.

Residues S349, D469, and H499 each act as charge relay system in the active site.

Belongs to the peptidase S15 family. As to quaternary structure, homodimer.

The protein localises to the cytoplasm. It catalyses the reaction Hydrolyzes Xaa-Pro-|- bonds to release unblocked, N-terminal dipeptides from substrates including Ala-Pro-|-p-nitroanilide and (sequentially) Tyr-Pro-|-Phe-Pro-|-Gly-Pro-|-Ile.. Functionally, removes N-terminal dipeptides sequentially from polypeptides having unsubstituted N-termini provided that the penultimate residue is proline. The polypeptide is Xaa-Pro dipeptidyl-peptidase (Streptococcus pyogenes serotype M28 (strain MGAS6180)).